Consider the following 623-residue polypeptide: ATP-dependent zinc metalloprotease FtsH (623 aa).

The Cytoplasmic portion of the chain corresponds to 1 to 7 (MNQSFWR). The chain crosses the membrane as a helical span at residues 8 to 28 (PLFAILLFMLVFHLTNIFFAQ). Residues 29–117 (QGAQVAQISY…EVSALSTETP (89 aa)) are Periplasmic-facing. A helical membrane pass occupies residues 118-138 (LLLNALIYVAPWVILIAIWWV). Over 139-623 (GMRSMRSQGP…SLNTAQAPPP (485 aa)) the chain is Cytoplasmic. 214-221 (GPPGTGKT) is a binding site for ATP. H435 lines the Zn(2+) pocket. E436 is a catalytic residue. Zn(2+) contacts are provided by H439 and D511.

The protein in the central section; belongs to the AAA ATPase family. In the C-terminal section; belongs to the peptidase M41 family. As to quaternary structure, homohexamer. Zn(2+) is required as a cofactor.

It localises to the cell inner membrane. In terms of biological role, acts as a processive, ATP-dependent zinc metallopeptidase for both cytoplasmic and membrane proteins. Plays a role in the quality control of integral membrane proteins. This Pelobacter propionicus (strain DSM 2379 / NBRC 103807 / OttBd1) protein is ATP-dependent zinc metalloprotease FtsH.